The sequence spans 570 residues: MFAKAFRVKSNTAIKGSDRRKLRADVTAAFPALGTDQISELIPGKEELNVVKLYVHKGDSVTVYTSGGNPILFELEKNLYPTVYTLWAYPDILPTFITWPLVLEKLVGGADLMLPGVVVPPTGLPQVQQGDLCAIALVGNRAPVAIGVAAMSTAQMLASGLKGKGVSVLHTYQDHLWRSGDKSSPPAIAPLDPTDSCEEKVHLGLQGNLKSLTLDGEEENGQVPLREASEDTSSRAPSQDSLDGKPLQEQMDDLLLRCFLHALKSRVKKADLPLLTSTLLGSHMFSCCPEGQQLDIKKSSYKKLSKFLQHMQQEQIVQVKELSKGVESIVAVDWRHPRITSFVIPEPSLTSQTVQEVSREQPYLPPDIKSLYCVPANMTQLFLESGHKKGSTLEGSEVRKIITDYAKRNRLVDADNRNLVKLDPILCDCILEKNEQHLVTKLPWDCLLTRCLKNMQPAYQVTFPGQEPILKKGKLCPIDITLALKTYNKKVTVVRNLETYGLDPCSVAAILQQRCQASTIVSPAPGAKDSLQVQVQGNQIHHLGQLLLEEYRLPGKYIQGLEKAPKPGKK.

Met-1 bears the N-acetylmethionine mark. In terms of domain architecture, PUA spans 93 to 173 (LPTFITWPLV…KGVSVLHTYQ (81 aa)). Positions 224–245 (PLREASEDTSSRAPSQDSLDGK) are disordered. Ser-238, Ser-241, and Ser-348 each carry phosphoserine. Positions 370-454 (SLYCVPANMT…DCLLTRCLKN (85 aa)) constitute an SWIB/MDM2 domain. Residues 478-548 (IDITLALKTY…QIHHLGQLLL (71 aa)) enclose the SUI1 domain.

It belongs to the eIF2D family.

Its subcellular location is the cytoplasm. In terms of biological role, translation initiation factor that is able to deliver tRNA to the P-site of the eukaryotic ribosome in a GTP-independent manner. The binding of Met-tRNA(I) occurs after the AUG codon finds its position in the P-site of 40S ribosomes, the situation that takes place during initiation complex formation on some specific RNAs. Its activity in tRNA binding with 40S subunits does not require the presence of the aminoacyl moiety. Possesses the unique ability to deliver non-Met (elongator) tRNAs into the P-site of the 40S subunit. In addition to its role in initiation, can promote release of deacylated tRNA and mRNA from recycled 40S subunits following ABCE1-mediated dissociation of post-termination ribosomal complexes into subunits. The protein is Eukaryotic translation initiation factor 2D (Eif2d) of Mus musculus (Mouse).